The primary structure comprises 152 residues: D-aminoacyl-tRNA deacylase (152 aa).

A Gly-cisPro motif, important for rejection of L-amino acids motif is present at residues 142 to 143; sequence GP.

It belongs to the DTD family. In terms of assembly, homodimer.

It is found in the cytoplasm. It carries out the reaction glycyl-tRNA(Ala) + H2O = tRNA(Ala) + glycine + H(+). The catalysed reaction is a D-aminoacyl-tRNA + H2O = a tRNA + a D-alpha-amino acid + H(+). Its function is as follows. An aminoacyl-tRNA editing enzyme that deacylates mischarged D-aminoacyl-tRNAs. Also deacylates mischarged glycyl-tRNA(Ala), protecting cells against glycine mischarging by AlaRS. Acts via tRNA-based rather than protein-based catalysis; rejects L-amino acids rather than detecting D-amino acids in the active site. By recycling D-aminoacyl-tRNA to D-amino acids and free tRNA molecules, this enzyme counteracts the toxicity associated with the formation of D-aminoacyl-tRNA entities in vivo and helps enforce protein L-homochirality. The chain is D-aminoacyl-tRNA deacylase from Burkholderia mallei (strain NCTC 10247).